The following is a 221-amino-acid chain: Sugar transporter SWEET1 (221 aa).

A run of 7 helical transmembrane segments spans residues 3–23 (AGGF…LGMF), 42–62 (VQFL…SYGA), 68–88 (ILIV…LAYL), 96–116 (VVLL…GYFW), 126–146 (LQLL…SPLA), 160–180 (LSYP…LYGF), and 186–206 (YIMV…WLFW). The region spanning 10–94 (LIYGACVVFT…LAYLHYCPRK (85 aa)) is the MtN3/slv 1 domain. A MtN3/slv 2 domain is found at 127 to 212 (QLLGLFCSVF…WLFWKYPQEQ (86 aa)). The mediates interaction with TRPV2 stretch occupies residues 149 to 221 (AKVIQTKSTQ…QDRNYWFLQT (73 aa)).

This sequence belongs to the SWEET sugar transporter family. Interacts with TRPV2; the interaction probably occurs intracellularly and depends on TRPV2 N-glycosylation.

The protein localises to the golgi apparatus membrane. It localises to the cell membrane. Its function is as follows. Mediates sugar transport across membranes. May stimulate V(D)J recombination by the activation of RAG1. This Papio anubis (Olive baboon) protein is Sugar transporter SWEET1 (SLC50A1).